A 76-amino-acid polypeptide reads, in one-letter code: Zinc finger protein 706 (76 aa).

The segment covering 1 to 13 has biased composition (low complexity); sequence MARGQQKIQSQQK. Disordered stretches follow at residues 1–32 and 53–76; these read MARGQQKIQSQQKNAKKQAGQKKKQGHDQKAA and TFKQHFESKHPKTPLPPELADVQA. Positions 14 to 25 are enriched in basic residues; the sequence is NAKKQAGQKKKQ. The C2H2-type zinc finger occupies 39–62; the sequence is YTCTVCRTQMPDPKTFKQHFESKH. Residues 53–62 show a composition bias toward basic and acidic residues; that stretch reads TFKQHFESKH.

Its subcellular location is the cytoplasm. It is found in the nucleus. In terms of biological role, transcription repressor involved in the exit of embryonic stem cells (ESCs) from self-renewal. Acts by repressing expression of KLF4. The sequence is that of Zinc finger protein 706 from Homo sapiens (Human).